The primary structure comprises 78 residues: Small ribosomal subunit protein bS16 (78 aa).

The protein belongs to the bacterial ribosomal protein bS16 family.

This Maridesulfovibrio salexigens (strain ATCC 14822 / DSM 2638 / NCIMB 8403 / VKM B-1763) (Desulfovibrio salexigens) protein is Small ribosomal subunit protein bS16.